The chain runs to 262 residues: Ribosomal RNA small subunit methyltransferase A (262 aa).

I18, G43, E65, D91, and N110 together coordinate S-adenosyl-L-methionine.

This sequence belongs to the class I-like SAM-binding methyltransferase superfamily. rRNA adenine N(6)-methyltransferase family. RsmA subfamily.

It is found in the cytoplasm. It catalyses the reaction adenosine(1518)/adenosine(1519) in 16S rRNA + 4 S-adenosyl-L-methionine = N(6)-dimethyladenosine(1518)/N(6)-dimethyladenosine(1519) in 16S rRNA + 4 S-adenosyl-L-homocysteine + 4 H(+). Specifically dimethylates two adjacent adenosines (A1518 and A1519) in the loop of a conserved hairpin near the 3'-end of 16S rRNA in the 30S particle. May play a critical role in biogenesis of 30S subunits. This Ehrlichia ruminantium (strain Gardel) protein is Ribosomal RNA small subunit methyltransferase A.